Reading from the N-terminus, the 308-residue chain is Glutaminase (308 aa).

Residues Ser-66, Asn-117, Glu-161, Asn-168, Tyr-192, Tyr-244, and Val-262 each contribute to the substrate site.

The protein belongs to the glutaminase family. As to quaternary structure, homotetramer.

The enzyme catalyses L-glutamine + H2O = L-glutamate + NH4(+). In Klebsiella pneumoniae (strain 342), this protein is Glutaminase.